The chain runs to 204 residues: Somatotropin (204 aa).

A signal peptide spans 1–17; sequence MDRVVLMLSVMSLGVSS. The residue at position 18 (Gln-18) is a Pyrrolidone carboxylic acid. Residue His-36 participates in Zn(2+) binding. A disulfide bridge links Cys-69 with Cys-177. Residue Glu-186 participates in Zn(2+) binding. Cys-194 and Cys-202 are joined by a disulfide.

This sequence belongs to the somatotropin/prolactin family.

The protein localises to the secreted. Its function is as follows. Growth hormone plays an important role in growth control and is involved in the regulation of several anabolic processes. Implicated as an osmoregulatory substance important for seawater adaptation. This is Somatotropin (gh) from Sparus aurata (Gilthead sea bream).